A 358-amino-acid polypeptide reads, in one-letter code: Programmed cell death protein 2-like (358 aa).

Ala-2 bears the N-acetylalanine mark. The residue at position 20 (Ser-20) is a Phosphoserine. Thr-22 is subject to Phosphothreonine.

Higher expression in lung, colon, mammary gland, cervix, stomach and small intestine.

Functionally, over-expression suppresses AP1, CREB, NFAT, and NF-kB transcriptional activation, and delays cell cycle progression at S phase. This chain is Programmed cell death protein 2-like (PDCD2L), found in Homo sapiens (Human).